Reading from the N-terminus, the 72-residue chain is Disintegrin basilicin (72 aa).

A Disintegrin domain is found at 1-72; it reads AGEECDCGSP…ADCPRNHFHA (72 aa). Cystine bridges form between Cys-5-Cys-20, Cys-7-Cys-15, Cys-14-Cys-37, Cys-28-Cys-34, Cys-33-Cys-58, and Cys-46-Cys-65. The short motif at 50–52 is the Cell attachment site element; the sequence is RGD.

The protein belongs to the venom metalloproteinase (M12B) family. P-II subfamily. P-IIa sub-subfamily. As to quaternary structure, monomer (disintegrin). In terms of tissue distribution, expressed by the venom gland.

It localises to the secreted. In terms of biological role, inhibits fibrinogen interaction with platelets. Acts by binding to alpha-IIb/beta-3 (ITGA2B/ITGB3) on the platelet surface and inhibits aggregation induced by ADP, thrombin, platelet-activating factor and collagen. This chain is Disintegrin basilicin, found in Crotalus basiliscus (Mexican west-coast rattlesnake).